Here is a 471-residue protein sequence, read N- to C-terminus: UDP-N-acetylmuramate--L-alanine ligase (471 aa).

114 to 120 (GTHGKTT) is an ATP binding site.

Belongs to the MurCDEF family.

The protein localises to the cytoplasm. It catalyses the reaction UDP-N-acetyl-alpha-D-muramate + L-alanine + ATP = UDP-N-acetyl-alpha-D-muramoyl-L-alanine + ADP + phosphate + H(+). The protein operates within cell wall biogenesis; peptidoglycan biosynthesis. Cell wall formation. The polypeptide is UDP-N-acetylmuramate--L-alanine ligase (Methylobacterium nodulans (strain LMG 21967 / CNCM I-2342 / ORS 2060)).